Reading from the N-terminus, the 286-residue chain is MRYIRLCIISLLATLPLAVHASPQPLEQIKQSESQLSGRVGMIEMDLASGRTLTAWRADERFPMMSTFKVVLCGAVLARVDAGDEQLERKIHYRQQDLVDYSPVSEKHLADGMTVGELCAAAITMSDNSAANLLLATVGGPAGLTAFLRQIGDNVTRLDRWETELNEALPGDARDTTTPASMAATLRKLLTSQRLSARSQRQLLQWMVDDRVAGPLIRSVLPAGWFIADKTGASERGARGIVALLGPNNKAERIVVIYLRDTPASMAERNQQIAGIGAALIEHWQR.

An N-terminal signal peptide occupies residues 1–21 (MRYIRLCIISLLATLPLAVHA). Serine 66 functions as the Acyl-ester intermediate in the catalytic mechanism. Cysteine 73 and cysteine 119 are disulfide-bonded. Glutamate 164 functions as the Proton acceptor in the catalytic mechanism. Residue 230-232 (KTG) participates in substrate binding.

Belongs to the class-A beta-lactamase family.

It catalyses the reaction a beta-lactam + H2O = a substituted beta-amino acid. Its function is as follows. This enzyme hydrolyzes cefotaxime, ceftazidime and other broad spectrum cephalosporins. This is Beta-lactamase SHV-2 (bla) from Klebsiella pneumoniae.